Reading from the N-terminus, the 162-residue chain is Transcription elongation factor GreA (162 aa).

Residues 48–76 (NSEYQSAKDEQAFVEGRVKQLQQMIQFAQ) are a coiled coil. A disordered region spans residues 111-132 (GSAESDPLSGKISNDSPMGKAL).

It belongs to the GreA/GreB family.

Necessary for efficient RNA polymerase transcription elongation past template-encoded arresting sites. The arresting sites in DNA have the property of trapping a certain fraction of elongating RNA polymerases that pass through, resulting in locked ternary complexes. Cleavage of the nascent transcript by cleavage factors such as GreA or GreB allows the resumption of elongation from the new 3'terminus. GreA releases sequences of 2 to 3 nucleotides. The sequence is that of Transcription elongation factor GreA from Oenococcus oeni (strain ATCC BAA-331 / PSU-1).